The primary structure comprises 92 residues: Small ribosomal subunit protein uS19 (92 aa).

The protein belongs to the universal ribosomal protein uS19 family.

In terms of biological role, protein S19 forms a complex with S13 that binds strongly to the 16S ribosomal RNA. This Lachnoclostridium phytofermentans (strain ATCC 700394 / DSM 18823 / ISDg) (Clostridium phytofermentans) protein is Small ribosomal subunit protein uS19.